A 378-amino-acid chain; its full sequence is Isobutylamine N-hydroxylase (378 aa).

Exists in dimeric or trimeric form depending upon buffer conditions. It can form an isobutylamine N-hydroxylase two component enzyme system formed of a flavin reductase component (VlmR) and a monooxygenase component (VlmH).

The catalysed reaction is 2-methylpropan-1-amine + FADH2 + O2 = N-(2-methylpropyl)hydroxylamine + FAD + H2O + 2 H(+). The enzyme catalyses 2-methylpropan-1-amine + FMNH2 + O2 = N-(2-methylpropyl)hydroxylamine + FMN + H2O + 2 H(+). Its activity is regulated as follows. Inhibited by 5',5'-dithio-bis(2-nitrobenzoic acid) (DTNB) and 4-(hydroxymercuri)benzoic acid (p-HMB). In terms of biological role, involved in the biosynthesis of the azoxy antibiotic valanimycin, which has an antitumor activity. Catalyzes the oxidation of isobutylamine to isobutylhydroxylamine via the formation of a flavin 4a-hydroperoxide. Unlike other known N-hydroxylases, isobutylamine N-hydroxylase cannot carry out the reduction of the flavin cofactor and requires the NADPH-flavin oxidoreductase VlmR. Also able to oxidize propan-1-amine, butan-1-amine, butan-2-amine and benzylamine. It has a similar activity with either FMNH(2) or FADH(2). The sequence is that of Isobutylamine N-hydroxylase from Streptomyces viridifaciens.